A 407-amino-acid polypeptide reads, in one-letter code: Tryptophan 2,3-dioxygenase B (407 aa).

Substrate is bound by residues 71 to 75 (FIVTH) and arginine 143. Histidine 327 is a heme binding site. Threonine 341 serves as a coordination point for substrate.

The protein belongs to the tryptophan 2,3-dioxygenase family. As to quaternary structure, homotetramer. Dimer of dimers. The cofactor is heme.

It carries out the reaction L-tryptophan + O2 = N-formyl-L-kynurenine. It functions in the pathway amino-acid degradation; L-tryptophan degradation via kynurenine pathway; L-kynurenine from L-tryptophan: step 1/2. In terms of biological role, heme-dependent dioxygenase that catalyzes the oxidative cleavage of the L-tryptophan (L-Trp) pyrrole ring and converts L-tryptophan to N-formyl-L-kynurenine. Catalyzes the oxidative cleavage of the indole moiety. The sequence is that of Tryptophan 2,3-dioxygenase B from Danio rerio (Zebrafish).